The following is a 188-amino-acid chain: dCTP deaminase (188 aa).

DCTP is bound by residues 111-116, 135-137, glutamine 156, tyrosine 170, and glutamine 180; these read KSTYAR and TLE. Glutamate 137 functions as the Proton donor/acceptor in the catalytic mechanism.

This sequence belongs to the dCTP deaminase family. In terms of assembly, homotrimer.

The enzyme catalyses dCTP + H2O + H(+) = dUTP + NH4(+). It functions in the pathway pyrimidine metabolism; dUMP biosynthesis; dUMP from dCTP (dUTP route): step 1/2. Catalyzes the deamination of dCTP to dUTP. This is dCTP deaminase from Cupriavidus pinatubonensis (strain JMP 134 / LMG 1197) (Cupriavidus necator (strain JMP 134)).